A 75-amino-acid chain; its full sequence is Insecticidal toxin OcyC10 (75 aa).

The N-terminal stretch at 1–19 is a signal peptide; it reads MNFATKIVILLLVAALILA. Cystine bridges form between Cys-50-Cys-62 and Cys-56-Cys-68.

In terms of tissue distribution, expressed by the venom gland.

It is found in the secreted. In terms of biological role, insecticidal toxin. This is Insecticidal toxin OcyC10 from Opisthacanthus cayaporum (South American scorpion).